A 284-amino-acid polypeptide reads, in one-letter code: Shikimate dehydrogenase (NADP(+)) (284 aa).

Shikimate-binding positions include 20-22 (SIS) and S67. The Proton acceptor role is filled by K71. An NADP(+)-binding site is contributed by D83. Residues N92 and D107 each coordinate shikimate. NADP(+) is bound by residues 129–133 (GAGGA) and I227. Y229 lines the shikimate pocket. NADP(+) is bound at residue G250.

This sequence belongs to the shikimate dehydrogenase family. In terms of assembly, homodimer.

It carries out the reaction shikimate + NADP(+) = 3-dehydroshikimate + NADPH + H(+). It functions in the pathway metabolic intermediate biosynthesis; chorismate biosynthesis; chorismate from D-erythrose 4-phosphate and phosphoenolpyruvate: step 4/7. Involved in the biosynthesis of the chorismate, which leads to the biosynthesis of aromatic amino acids. Catalyzes the reversible NADPH linked reduction of 3-dehydroshikimate (DHSA) to yield shikimate (SA). The sequence is that of Shikimate dehydrogenase (NADP(+)) from Streptococcus pneumoniae (strain 70585).